The chain runs to 324 residues: Methionyl-tRNA formyltransferase (324 aa).

109–112 (SILP) contacts (6S)-5,6,7,8-tetrahydrofolate.

The protein belongs to the Fmt family.

It carries out the reaction L-methionyl-tRNA(fMet) + (6R)-10-formyltetrahydrofolate = N-formyl-L-methionyl-tRNA(fMet) + (6S)-5,6,7,8-tetrahydrofolate + H(+). Functionally, attaches a formyl group to the free amino group of methionyl-tRNA(fMet). The formyl group appears to play a dual role in the initiator identity of N-formylmethionyl-tRNA by promoting its recognition by IF2 and preventing the misappropriation of this tRNA by the elongation apparatus. The sequence is that of Methionyl-tRNA formyltransferase from Acidothermus cellulolyticus (strain ATCC 43068 / DSM 8971 / 11B).